The sequence spans 217 residues: Hypersensitivity response secretion protein HrcR (217 aa).

Helical transmembrane passes span 6–26 (FASL…AMVV), 52–72 (MVLN…VGME), 158–178 (IGFL…NLLM), and 190–210 (VAIP…VLIH).

This sequence belongs to the FliP/MopC/SpaP family.

It is found in the cell membrane. Involved in the secretion of PopA, a proteinaceous elicitor of the hypersensitivity response in plants. The chain is Hypersensitivity response secretion protein HrcR (hrcR) from Ralstonia nicotianae (strain ATCC BAA-1114 / GMI1000) (Ralstonia solanacearum).